Reading from the N-terminus, the 88-residue chain is Alpha-latrotoxin-associated low molecular weight protein-2 (88 aa).

An N-terminal signal peptide occupies residues 1–19 (MLKLICIAFLVTVLTLVAG). Glutamine 20 is subject to Pyrrolidone carboxylic acid. 3 disulfides stabilise this stretch: cysteine 30/cysteine 66, cysteine 46/cysteine 62, and cysteine 49/cysteine 75.

Belongs to the arthropod CHH/MIH/GIH/VIH hormone family. In terms of processing, the N-terminus is blocked. Expressed by the venom gland.

The protein resides in the secreted. May increase the toxicity of alpha-latrotoxin and/or other venom components. Is non-toxic to mice and to the cockroach Periplaneta americana. The sequence is that of Alpha-latrotoxin-associated low molecular weight protein-2 from Latrodectus tredecimguttatus (Mediterranean black widow spider).